We begin with the raw amino-acid sequence, 233 residues long: H-2 class II histocompatibility antigen, A-R alpha chain (233 aa).

Positions 1 to 88 (EDDIEADHVG…KRSNFTPAAN (88 aa)) are alpha-1. Over 1-195 (EDDIEADHVG…IPAPMSELTE (195 aa)) the chain is Extracellular. Residues 89-182 (EAPQATVFPK…GLEEPVLKHW (94 aa)) are alpha-2. Residues 91-183 (PQATVFPKSP…LEEPVLKHWE (93 aa)) form the Ig-like C1-type domain. The cysteines at positions 111 and 167 are disulfide-linked. N-linked (GlcNAc...) asparagine glycosylation is present at N122. A connecting peptide region spans residues 183 to 195 (EPEIPAPMSELTE). The helical transmembrane segment at 196-221 (TVVCALGLSVGLVGIVVGTIFIIQGL) threads the bilayer. At 222–233 (RSGGTSRHPGPL) the chain is on the cytoplasmic side.

It belongs to the MHC class II family.

The protein resides in the membrane. The polypeptide is H-2 class II histocompatibility antigen, A-R alpha chain (H2-Aa) (Mus musculus (Mouse)).